A 121-amino-acid polypeptide reads, in one-letter code: Ribosome-binding factor A (121 aa).

Belongs to the RbfA family. Monomer. Binds 30S ribosomal subunits, but not 50S ribosomal subunits or 70S ribosomes.

The protein resides in the cytoplasm. One of several proteins that assist in the late maturation steps of the functional core of the 30S ribosomal subunit. Associates with free 30S ribosomal subunits (but not with 30S subunits that are part of 70S ribosomes or polysomes). Required for efficient processing of 16S rRNA. May interact with the 5'-terminal helix region of 16S rRNA. In Clostridium acetobutylicum (strain ATCC 824 / DSM 792 / JCM 1419 / IAM 19013 / LMG 5710 / NBRC 13948 / NRRL B-527 / VKM B-1787 / 2291 / W), this protein is Ribosome-binding factor A.